Consider the following 148-residue polypeptide: Lysozyme C (148 aa).

An N-terminal signal peptide occupies residues Met1 to Gly18. The region spanning Lys19–Val148 is the C-type lysozyme domain. Cystine bridges form between Cys24–Cys146, Cys48–Cys134, Cys83–Cys99, and Cys95–Cys113. Catalysis depends on residues Glu53 and Asp71.

This sequence belongs to the glycosyl hydrolase 22 family. As to quaternary structure, monomer.

The protein localises to the secreted. The catalysed reaction is Hydrolysis of (1-&gt;4)-beta-linkages between N-acetylmuramic acid and N-acetyl-D-glucosamine residues in a peptidoglycan and between N-acetyl-D-glucosamine residues in chitodextrins.. Lysozymes have primarily a bacteriolytic function; those in tissues and body fluids are associated with the monocyte-macrophage system and enhance the activity of immunoagents. The protein is Lysozyme C (LYZ) of Papio anubis (Olive baboon).